Reading from the N-terminus, the 153-residue chain is Insulin-like growth factor 1 (153 aa).

The interval 49 to 77 (GPETLCGAELVDALQFVCGPRGFYFNKPT) is b. Intrachain disulfides connect cysteine 54/cysteine 96, cysteine 66/cysteine 109, and cysteine 95/cysteine 100. The c stretch occupies residues 78–89 (GYGSSIRRAPQT). The interval 90 to 110 (GIVDECCFRSCDLRRLEMYCA) is a. The d stretch occupies residues 111–118 (PLKPTKSA). The propeptide at 119 to 153 (RSIRAQRHTDMPKTQKEVHLKNTSRGSAGNKTYRM) is e peptide. A disordered region spans residues 119–153 (RSIRAQRHTDMPKTQKEVHLKNTSRGSAGNKTYRM). Basic and acidic residues predominate over residues 125-138 (RHTDMPKTQKEVHL). Positions 139–153 (KNTSRGSAGNKTYRM) are enriched in polar residues.

Belongs to the insulin family. Forms a ternary complex with IGFR1 and ITGAV:ITGB3. Forms a ternary complex with IGFR1 and ITGA6:ITGB4. Forms a ternary complex with IGFBP3 and ALS.

It localises to the secreted. Its function is as follows. The insulin-like growth factors, isolated from plasma, are structurally and functionally related to insulin but have a much higher growth-promoting activity. May be a physiological regulator of [1-14C]-2-deoxy-D-glucose (2DG) transport and glycogen synthesis in osteoblasts. Stimulates glucose transport in bone-derived osteoblastic (PyMS) cells and is effective at much lower concentrations than insulin, not only regarding glycogen and DNA synthesis but also with regard to enhancing glucose uptake. May play a role in synapse maturation. Ca(2+)-dependent exocytosis of IGF1 is required for sensory perception of smell in the olfactory bulb. Acts as a ligand for IGF1R. Binds to the alpha subunit of IGF1R, leading to the activation of the intrinsic tyrosine kinase activity which autophosphorylates tyrosine residues in the beta subunit thus initiating a cascade of down-stream signaling events leading to activation of the PI3K-AKT/PKB and the Ras-MAPK pathways. Binds to integrins ITGAV:ITGB3 and ITGA6:ITGB4. Its binding to integrins and subsequent ternary complex formation with integrins and IGFR1 are essential for IGF1 signaling. Induces the phosphorylation and activation of IGFR1, MAPK3/ERK1, MAPK1/ERK2 and AKT1. As part of the MAPK/ERK signaling pathway, acts as a negative regulator of apoptosis in cardiomyocytes via promotion of STUB1/CHIP-mediated ubiquitination and degradation of ICER-type isoforms of CREM. The protein is Insulin-like growth factor 1 of Rattus norvegicus (Rat).